Consider the following 101-residue polypeptide: Helix-loop-helix protein 17 (101 aa).

Residues 14-27 (GVRLSINLRERCRM) form a basic motif region. The bHLH domain maps to 14-68 (GVRLSINLRERCRMHDLNEALDDLRAVIPYAHGGSVRKLSKIATLLLAKNHIIMQ). The interval 28-68 (HDLNEALDDLRAVIPYAHGGSVRKLSKIATLLLAKNHIIMQ) is helix-loop-helix motif.

Expressed in neuronal tissues of the head, including sheath cells of the cephalic sensilla (CEPsh) glia.

The protein localises to the nucleus. Probable transcription factor that regulates the expression of dopamine receptors dop-1, dop-2 and dop-3 and thus dopamine-dependent behaviors. May act redundantly with hlh-31 and hlh-32 to regulate ventral CEPsh glia functions. May play a role in chemotactic responses in larvae. This chain is Helix-loop-helix protein 17, found in Caenorhabditis elegans.